Consider the following 1298-residue polypeptide: Phosphoribosylformylglycinamidine synthase (1298 aa).

Residues 303–327 are disordered; that stretch reads FPGAATGSGGEIRDEGATGRGAKPK. Residues 305–316, 384–386, and Ala-676 each bind ATP; these read GAATGSGGEIRD and TGY. Positions 677, 716, 720, and 884 each coordinate Mg(2+). Ser-886 lines the ATP pocket. The Glutamine amidotransferase type-1 domain maps to 1045-1298; that stretch reads VAVLREQGVN…MFRNARAWVN (254 aa). Cys-1138 functions as the Nucleophile in the catalytic mechanism. Active-site residues include His-1263 and Glu-1265.

The protein in the N-terminal section; belongs to the FGAMS family. Monomer.

Its subcellular location is the cytoplasm. It carries out the reaction N(2)-formyl-N(1)-(5-phospho-beta-D-ribosyl)glycinamide + L-glutamine + ATP + H2O = 2-formamido-N(1)-(5-O-phospho-beta-D-ribosyl)acetamidine + L-glutamate + ADP + phosphate + H(+). It functions in the pathway purine metabolism; IMP biosynthesis via de novo pathway; 5-amino-1-(5-phospho-D-ribosyl)imidazole from N(2)-formyl-N(1)-(5-phospho-D-ribosyl)glycinamide: step 1/2. Its function is as follows. Phosphoribosylformylglycinamidine synthase involved in the purines biosynthetic pathway. Catalyzes the ATP-dependent conversion of formylglycinamide ribonucleotide (FGAR) and glutamine to yield formylglycinamidine ribonucleotide (FGAM) and glutamate. This chain is Phosphoribosylformylglycinamidine synthase, found in Pseudomonas syringae pv. tomato (strain ATCC BAA-871 / DC3000).